We begin with the raw amino-acid sequence, 269 residues long: 1-(5-phosphoribosyl)-5-[(5-phosphoribosylamino)methylideneamino] imidazole-4-carboxamide isomerase (269 aa).

The Proton acceptor role is filled by Asp-10. The active-site Proton donor is Asp-132.

Belongs to the HisA/HisF family.

Its subcellular location is the cytoplasm. It carries out the reaction 1-(5-phospho-beta-D-ribosyl)-5-[(5-phospho-beta-D-ribosylamino)methylideneamino]imidazole-4-carboxamide = 5-[(5-phospho-1-deoxy-D-ribulos-1-ylimino)methylamino]-1-(5-phospho-beta-D-ribosyl)imidazole-4-carboxamide. It participates in amino-acid biosynthesis; L-histidine biosynthesis; L-histidine from 5-phospho-alpha-D-ribose 1-diphosphate: step 4/9. The sequence is that of 1-(5-phosphoribosyl)-5-[(5-phosphoribosylamino)methylideneamino] imidazole-4-carboxamide isomerase from Xylella fastidiosa (strain M12).